Consider the following 206-residue polypeptide: Probable chemoreceptor glutamine deamidase CheD (206 aa).

The protein belongs to the CheD family.

The enzyme catalyses L-glutaminyl-[protein] + H2O = L-glutamyl-[protein] + NH4(+). Functionally, probably deamidates glutamine residues to glutamate on methyl-accepting chemotaxis receptors (MCPs), playing an important role in chemotaxis. The protein is Probable chemoreceptor glutamine deamidase CheD of Laribacter hongkongensis (strain HLHK9).